The chain runs to 431 residues: Glutamate-1-semialdehyde 2,1-aminomutase (431 aa).

Lysine 269 bears the N6-(pyridoxal phosphate)lysine mark.

This sequence belongs to the class-III pyridoxal-phosphate-dependent aminotransferase family. HemL subfamily. In terms of assembly, homodimer. Pyridoxal 5'-phosphate serves as cofactor.

The protein localises to the cytoplasm. The enzyme catalyses (S)-4-amino-5-oxopentanoate = 5-aminolevulinate. It functions in the pathway porphyrin-containing compound metabolism; protoporphyrin-IX biosynthesis; 5-aminolevulinate from L-glutamyl-tRNA(Glu): step 2/2. In Francisella tularensis subsp. tularensis (strain SCHU S4 / Schu 4), this protein is Glutamate-1-semialdehyde 2,1-aminomutase.